Consider the following 161-residue polypeptide: Cytochrome c-type biogenesis protein CcmE (161 aa).

The Cytoplasmic portion of the chain corresponds to 1-8 (MNPRRKKR). The chain crosses the membrane as a helical; Signal-anchor for type II membrane protein span at residues 9-29 (LGLILALFVGISATVGLMLYA). The Periplasmic segment spans residues 30 to 161 (LNQNMDLFYT…TEQQKQGTGQ (132 aa)). Residues H129 and Y133 each coordinate heme. Residues 142 to 161 (MKKTHEPLQYTEQQKQGTGQ) are disordered. The segment covering 151-161 (YTEQQKQGTGQ) has biased composition (polar residues).

The protein belongs to the CcmE/CycJ family.

The protein localises to the cell inner membrane. In terms of biological role, heme chaperone required for the biogenesis of c-type cytochromes. Transiently binds heme delivered by CcmC and transfers the heme to apo-cytochromes in a process facilitated by CcmF and CcmH. The sequence is that of Cytochrome c-type biogenesis protein CcmE from Aliivibrio fischeri (strain MJ11) (Vibrio fischeri).